Reading from the N-terminus, the 146-residue chain is uncharacterized protein (146 aa).

2 disordered regions span residues 1 to 33 and 50 to 70; these read MATF…GSYR and QHWR…SWEG.

This is an uncharacterized protein from Homo sapiens (Human).